A 305-amino-acid chain; its full sequence is Coenzyme PQQ synthesis protein B (305 aa).

It belongs to the PqqB family.

Its pathway is cofactor biosynthesis; pyrroloquinoline quinone biosynthesis. Its function is as follows. May be involved in the transport of PQQ or its precursor to the periplasm. The polypeptide is Coenzyme PQQ synthesis protein B (Cupriavidus necator (strain ATCC 17699 / DSM 428 / KCTC 22496 / NCIMB 10442 / H16 / Stanier 337) (Ralstonia eutropha)).